The following is a 200-amino-acid chain: ATP-dependent Clp protease proteolytic subunit 1 (200 aa).

The active-site Nucleophile is the serine 98. Histidine 123 is an active-site residue.

The protein belongs to the peptidase S14 family. Fourteen ClpP subunits assemble into 2 heptameric rings which stack back to back to give a disk-like structure with a central cavity, resembling the structure of eukaryotic proteasomes.

Its subcellular location is the cytoplasm. The enzyme catalyses Hydrolysis of proteins to small peptides in the presence of ATP and magnesium. alpha-casein is the usual test substrate. In the absence of ATP, only oligopeptides shorter than five residues are hydrolyzed (such as succinyl-Leu-Tyr-|-NHMec, and Leu-Tyr-Leu-|-Tyr-Trp, in which cleavage of the -Tyr-|-Leu- and -Tyr-|-Trp bonds also occurs).. Its function is as follows. Cleaves peptides in various proteins in a process that requires ATP hydrolysis. Has a chymotrypsin-like activity. Plays a major role in the degradation of misfolded proteins. This is ATP-dependent Clp protease proteolytic subunit 1 from Mycobacterium bovis (strain ATCC BAA-935 / AF2122/97).